The chain runs to 258 residues: Thrombin-like enzyme saxthrombin (258 aa).

Residues 1–18 form the signal peptide; sequence MVLIRVLANLLILQLSYA. Residues 19 to 24 constitute a propeptide that is removed on maturation; sequence QKSSEL. A Peptidase S1 domain is found at 25–249; sequence VIGGDECNIN…YNHWIQSIIA (225 aa). Disulfide bonds link Cys31–Cys163, Cys50–Cys66, Cys98–Cys256, Cys142–Cys210, Cys174–Cys189, and Cys200–Cys225. N-linked (GlcNAc...) asparagine glycosylation is present at Asn44. Catalysis depends on charge relay system residues His65 and Asp110. Residue Ser204 is the Charge relay system of the active site. N-linked (GlcNAc...) asparagine glycosylation occurs at Asn251.

The protein belongs to the peptidase S1 family. Snake venom subfamily. As to quaternary structure, monomer. Expressed by the venom gland.

It is found in the secreted. In terms of biological role, thrombin-like snake venom serine protease that shows strong blood coagulation activity in vitro. The polypeptide is Thrombin-like enzyme saxthrombin (Gloydius intermedius (Central Asian pit viper)).